Consider the following 236-residue polypeptide: Sensory rhodopsin II (236 aa).

Helical transmembrane passes span 4–24 (ITTW…VLAY), 38–58 (LLLI…ALGF), 73–93 (YVDW…LAGA), 101–121 (LVVL…TPSP), 122–142 (VSYA…YLLY), 167–187 (FVVV…AGVG), and 196–216 (LVVV…ALLA). Lys206 bears the N6-(retinylidene)lysine mark.

This sequence belongs to the archaeal/bacterial/fungal opsin family. The covalent binding of retinal to the apoprotein, bacterioopsin, generates bacteriorhodopsin.

Its subcellular location is the membrane. Functionally, mediates the photorepellent response. The protein is Sensory rhodopsin II (sop2) of Haloarcula marismortui (strain ATCC 43049 / DSM 3752 / JCM 8966 / VKM B-1809) (Halobacterium marismortui).